The chain runs to 794 residues: Phenylalanine--tRNA ligase beta subunit (794 aa).

Residues 40 to 158 (NSLNSELVLG…LKKYLGKDVK (119 aa)) form the tRNA-binding domain. Residues 402–477 (KNKTEFEIKI…RLYSYDNIQE (76 aa)) form the B5 domain. Residues aspartate 455, aspartate 461, glutamate 464, and glutamate 465 each coordinate Mg(2+). In terms of domain architecture, FDX-ACB spans 702 to 794 (SKFQSSSRDL…NVKKMKVVIR (93 aa)).

The protein belongs to the phenylalanyl-tRNA synthetase beta subunit family. Type 1 subfamily. In terms of assembly, tetramer of two alpha and two beta subunits. Mg(2+) serves as cofactor.

The protein resides in the cytoplasm. It catalyses the reaction tRNA(Phe) + L-phenylalanine + ATP = L-phenylalanyl-tRNA(Phe) + AMP + diphosphate + H(+). This is Phenylalanine--tRNA ligase beta subunit from Mycoplasma capricolum subsp. capricolum (strain California kid / ATCC 27343 / NCTC 10154).